Here is a 228-residue protein sequence, read N- to C-terminus: ATP phosphoribosyltransferase (228 aa).

Belongs to the ATP phosphoribosyltransferase family. Short subfamily. Heteromultimer composed of HisG and HisZ subunits.

The protein resides in the cytoplasm. It catalyses the reaction 1-(5-phospho-beta-D-ribosyl)-ATP + diphosphate = 5-phospho-alpha-D-ribose 1-diphosphate + ATP. Its pathway is amino-acid biosynthesis; L-histidine biosynthesis; L-histidine from 5-phospho-alpha-D-ribose 1-diphosphate: step 1/9. In terms of biological role, catalyzes the condensation of ATP and 5-phosphoribose 1-diphosphate to form N'-(5'-phosphoribosyl)-ATP (PR-ATP). Has a crucial role in the pathway because the rate of histidine biosynthesis seems to be controlled primarily by regulation of HisG enzymatic activity. The sequence is that of ATP phosphoribosyltransferase from Moorella thermoacetica (strain ATCC 39073 / JCM 9320).